Reading from the N-terminus, the 431-residue chain is UDP-N-acetylglucosamine 1-carboxyvinyltransferase (431 aa).

Lys22 to Asn23 lines the phosphoenolpyruvate pocket. Arg93 lines the UDP-N-acetyl-alpha-D-glucosamine pocket. Cys117 acts as the Proton donor in catalysis. The residue at position 117 (Cys117) is a 2-(S-cysteinyl)pyruvic acid O-phosphothioketal. Asp307 and Val329 together coordinate UDP-N-acetyl-alpha-D-glucosamine.

Belongs to the EPSP synthase family. MurA subfamily.

The protein localises to the cytoplasm. The enzyme catalyses phosphoenolpyruvate + UDP-N-acetyl-alpha-D-glucosamine = UDP-N-acetyl-3-O-(1-carboxyvinyl)-alpha-D-glucosamine + phosphate. The protein operates within cell wall biogenesis; peptidoglycan biosynthesis. In terms of biological role, cell wall formation. Adds enolpyruvyl to UDP-N-acetylglucosamine. The chain is UDP-N-acetylglucosamine 1-carboxyvinyltransferase from Nitrosococcus oceani (strain ATCC 19707 / BCRC 17464 / JCM 30415 / NCIMB 11848 / C-107).